Reading from the N-terminus, the 130-residue chain is MNFVFLWAALGGAIGSSLRYFVGKMMPSKFLMFESFPLGTFSVNIIGCFVIGFMGHLAVKKVFGDDFGIFFITGVLGGFTTFSSYGLDTLKLLQKSQYIEAISYVLGTNILGFIGVAIGWFLAKNFVGVN.

A run of 4 helical transmembrane segments spans residues 3–23, 39–59, 67–87, and 102–122; these read FVFLWAALGGAIGSSLRYFVG, GTFSVNIIGCFVIGFMGHLAV, FGIFFITGVLGGFTTFSSYGL, and ISYVLGTNILGFIGVAIGWFL. Residues glycine 77 and threonine 80 each coordinate Na(+).

Belongs to the fluoride channel Fluc/FEX (TC 1.A.43) family.

The protein localises to the cell inner membrane. The catalysed reaction is fluoride(in) = fluoride(out). Na(+) is not transported, but it plays an essential structural role and its presence is essential for fluoride channel function. Its function is as follows. Fluoride-specific ion channel. Important for reducing fluoride concentration in the cell, thus reducing its toxicity. The chain is Fluoride-specific ion channel FluC from Helicobacter pylori (strain P12).